The sequence spans 281 residues: NADPH-dependent 7-cyano-7-deazaguanine reductase (281 aa).

Residue 87–89 coordinates substrate; that stretch reads IES. An NADPH-binding site is contributed by 89-90; it reads SK. The active-site Thioimide intermediate is the C188. D195 acts as the Proton donor in catalysis. 227–228 serves as a coordination point for substrate; that stretch reads HE. 256–257 contacts NADPH; sequence RG.

The protein belongs to the GTP cyclohydrolase I family. QueF type 2 subfamily. Homodimer.

The protein localises to the cytoplasm. The catalysed reaction is 7-aminomethyl-7-carbaguanine + 2 NADP(+) = 7-cyano-7-deazaguanine + 2 NADPH + 3 H(+). The protein operates within tRNA modification; tRNA-queuosine biosynthesis. Its function is as follows. Catalyzes the NADPH-dependent reduction of 7-cyano-7-deazaguanine (preQ0) to 7-aminomethyl-7-deazaguanine (preQ1). The polypeptide is NADPH-dependent 7-cyano-7-deazaguanine reductase (Photobacterium profundum (strain SS9)).